The chain runs to 208 residues: Small ribosomal subunit protein uS5 (208 aa).

The tract at residues 1–38 (MPGRERRDGGRSADDNQKKNDRRGGRRDDRRNQQQDER) is disordered. Residues 41–104 (YIERVVTINR…EEARKNFFRV (64 aa)) enclose the S5 DRBM domain.

It belongs to the universal ribosomal protein uS5 family. As to quaternary structure, part of the 30S ribosomal subunit. Contacts proteins S4 and S8.

In terms of biological role, with S4 and S12 plays an important role in translational accuracy. Located at the back of the 30S subunit body where it stabilizes the conformation of the head with respect to the body. In Corynebacterium diphtheriae (strain ATCC 700971 / NCTC 13129 / Biotype gravis), this protein is Small ribosomal subunit protein uS5.